Consider the following 410-residue polypeptide: Peptidase T (410 aa).

Residue His78 participates in Zn(2+) binding. Asp80 is a catalytic residue. Asp140 is a Zn(2+) binding site. Glu174 acts as the Proton acceptor in catalysis. 3 residues coordinate Zn(2+): Glu175, Asp197, and His379.

Belongs to the peptidase M20B family. Requires Zn(2+) as cofactor.

Its subcellular location is the cytoplasm. It catalyses the reaction Release of the N-terminal residue from a tripeptide.. Its function is as follows. Cleaves the N-terminal amino acid of tripeptides. The protein is Peptidase T of Vibrio atlanticus (strain LGP32) (Vibrio splendidus (strain Mel32)).